A 254-amino-acid polypeptide reads, in one-letter code: Proteasome subunit alpha (254 aa).

The tract at residues 231 to 254 (ESGAASADGEAETEAETDSGSDEE) is disordered. Residues 239-254 (GEAETEAETDSGSDEE) are compositionally biased toward acidic residues.

The protein belongs to the peptidase T1A family. As to quaternary structure, the 20S proteasome core is composed of 14 alpha and 14 beta subunits that assemble into four stacked heptameric rings, resulting in a barrel-shaped structure. The two inner rings, each composed of seven catalytic beta subunits, are sandwiched by two outer rings, each composed of seven alpha subunits. The catalytic chamber with the active sites is on the inside of the barrel. Has probably a gated structure, the ends of the cylinder being occluded by the N-termini of the alpha-subunits. Is likely capped by the proteasome-associated ATPase, ARC. Post-translationally, the N-terminus is blocked.

Its subcellular location is the cytoplasm. Its pathway is protein degradation; proteasomal Pup-dependent pathway. Its activity is regulated as follows. The formation of the proteasomal ATPase ARC-20S proteasome complex, likely via the docking of the C-termini of ARC into the intersubunit pockets in the alpha-rings, may trigger opening of the gate for substrate entry. Interconversion between the open-gate and close-gate conformations leads to a dynamic regulation of the 20S proteasome proteolysis activity. Peptidolytic activity is completely inhibited by lactacystin, and to a lesser extent, by N-acetyl-Leu-Leu-norleucinal (Ac-LLnL) and benzoyloxycarbonyl-Leu-Leu-Leu-vinylsulfone (Z-LLL-VS) in vitro. Functionally, component of the proteasome core, a large protease complex with broad specificity involved in protein degradation. The S.coelicolor proteasome is able to cleave oligopeptides after hydrophobic residues, but not after basic or acidic residues, thus displaying chymotrypsin-like activity but not trypsin-like activity. The protein is Proteasome subunit alpha of Streptomyces coelicolor (strain ATCC BAA-471 / A3(2) / M145).